The sequence spans 248 residues: Protein canopy homolog 4 (248 aa).

An N-terminal signal peptide occupies residues 1–21; that stretch reads MGPVRLGILLFLFLAVHEAWA. 3 disulfides stabilise this stretch: Cys-38/Cys-196, Cys-41/Cys-184, and Cys-94/Cys-156. A disordered region spans residues 200–248; that stretch reads TWTGKEITDGEEKTEGEEEQEEEEEEEEEEGGDKMTKTGSHPKLDREDL. The segment covering 213–230 has biased composition (acidic residues); that stretch reads TEGEEEQEEEEEEEEEEG. Positions 231–248 are enriched in basic and acidic residues; the sequence is GDKMTKTGSHPKLDREDL.

It belongs to the canopy family. In terms of assembly, interacts with TLR4.

Its subcellular location is the secreted. Its function is as follows. Plays a role in the regulation of the cell surface expression of TLR4. This chain is Protein canopy homolog 4 (CNPY4), found in Homo sapiens (Human).